Here is a 103-residue protein sequence, read N- to C-terminus: Co-chaperonin GroES (103 aa).

It belongs to the GroES chaperonin family. As to quaternary structure, heptamer of 7 subunits arranged in a ring. Interacts with the chaperonin GroEL.

It is found in the cytoplasm. In terms of biological role, together with the chaperonin GroEL, plays an essential role in assisting protein folding. The GroEL-GroES system forms a nano-cage that allows encapsulation of the non-native substrate proteins and provides a physical environment optimized to promote and accelerate protein folding. GroES binds to the apical surface of the GroEL ring, thereby capping the opening of the GroEL channel. The sequence is that of Co-chaperonin GroES from Thermosynechococcus vestitus (strain NIES-2133 / IAM M-273 / BP-1).